A 766-amino-acid polypeptide reads, in one-letter code: FYVE, RhoGEF and PH domain-containing protein 4 (766 aa).

Residues 1-150 are actin filament-binding; the sequence is MEESNPAPTS…SSIANSHDEN (150 aa). Composition is skewed to polar residues over residues 47-62 and 70-85; these read LNIP…TSSP and HSPQ…TQGQ. Disordered regions lie at residues 47 to 86 and 143 to 173; these read LNIP…QGQH and IANS…GEPG. One can recognise a DH domain in the interval 206 to 393; the sequence is KLHKIATELL…STAASHSNSA (188 aa). The region spanning 422 to 521 is the PH 1 domain; it reads ELIKEGQILK…WIKALQESID (100 aa). The segment at 559-619 adopts an FYVE-type zinc-finger fold; sequence DNEVTMCMKC…VCKDCYQIIS (61 aa). The Zn(2+) site is built by cysteine 565, cysteine 568, cysteine 582, cysteine 585, cysteine 590, cysteine 593, cysteine 611, and cysteine 614. A PH 2 domain is found at 643 to 740; it reads NSEVCSFLQY…WLKIILLAVT (98 aa). A phosphoserine mark is found at serine 702 and serine 716. The interval 746 to 766 is disordered; that stretch reads GPSEHLATLNNLPGPKKKSEC.

In terms of assembly, homooligomer. In terms of tissue distribution, detected in thymus, lung, heart, skeletal muscle, small intestine, liver, kidney, spleen and testis. Expressed in all parts of the brain and in the spinal cord at embryonic, postnatal, and adult stages. Levels of expression are lower in postnatal and adult tissues than in embryonic tissues.

It localises to the cytoplasm. It is found in the cytoskeleton. Its subcellular location is the cell projection. The protein localises to the filopodium. Functionally, activates CDC42, a member of the Ras-like family of Rho- and Rac proteins, by exchanging bound GDP for free GTP. Activates MAPK8. Plays a role in regulating the actin cytoskeleton and cell shape. Promotes the formation of lamellipodia. In Mus musculus (Mouse), this protein is FYVE, RhoGEF and PH domain-containing protein 4 (Fgd4).